Here is a 204-residue protein sequence, read N- to C-terminus: Large ribosomal subunit protein uL4 (204 aa).

The segment at 49–75 (TKGRSDVSGGGKKPWRQKGRGGARAGS) is disordered.

It belongs to the universal ribosomal protein uL4 family. As to quaternary structure, part of the 50S ribosomal subunit.

In terms of biological role, one of the primary rRNA binding proteins, this protein initially binds near the 5'-end of the 23S rRNA. It is important during the early stages of 50S assembly. It makes multiple contacts with different domains of the 23S rRNA in the assembled 50S subunit and ribosome. Its function is as follows. Forms part of the polypeptide exit tunnel. In Campylobacter jejuni subsp. jejuni serotype O:23/36 (strain 81-176), this protein is Large ribosomal subunit protein uL4.